The sequence spans 138 residues: Small ribosomal subunit protein uS11 (138 aa).

This sequence belongs to the universal ribosomal protein uS11 family. Part of the 30S ribosomal subunit.

Its function is as follows. Located on the platform of the 30S subunit. This is Small ribosomal subunit protein uS11 from Pyrobaculum arsenaticum (strain DSM 13514 / JCM 11321 / PZ6).